Consider the following 181-residue polypeptide: Large ribosomal subunit protein uL5 (181 aa).

This sequence belongs to the universal ribosomal protein uL5 family. As to quaternary structure, part of the 50S ribosomal subunit; part of the 5S rRNA/L5/L18/L25 subcomplex. Contacts the 5S rRNA and the P site tRNA. Forms a bridge to the 30S subunit in the 70S ribosome.

Functionally, this is one of the proteins that bind and probably mediate the attachment of the 5S RNA into the large ribosomal subunit, where it forms part of the central protuberance. In the 70S ribosome it contacts protein S13 of the 30S subunit (bridge B1b), connecting the 2 subunits; this bridge is implicated in subunit movement. Contacts the P site tRNA; the 5S rRNA and some of its associated proteins might help stabilize positioning of ribosome-bound tRNAs. This Aster yellows witches'-broom phytoplasma (strain AYWB) protein is Large ribosomal subunit protein uL5.